The primary structure comprises 249 residues: DNA repair protein RecO (249 aa).

Belongs to the RecO family.

Its function is as follows. Involved in DNA repair and RecF pathway recombination. The chain is DNA repair protein RecO from Mycoplasma mycoides subsp. mycoides SC (strain CCUG 32753 / NCTC 10114 / PG1).